Reading from the N-terminus, the 1216-residue chain is ATP-dependent helicase/nuclease subunit A (1216 aa).

A UvrD-like helicase ATP-binding domain is found at 26–488; the sequence is QKKTAEQIEA…IILKENFRSS (463 aa). Position 47–54 (47–54) interacts with ATP; it reads ASAGSGKT. The UvrD-like helicase C-terminal domain occupies 515–802; it reads KHQLVFANTK…ELMTIHKSKG (288 aa).

Belongs to the helicase family. AddA subfamily. In terms of assembly, heterodimer of AddA and AddB/RexB. The cofactor is Mg(2+).

The enzyme catalyses Couples ATP hydrolysis with the unwinding of duplex DNA by translocating in the 3'-5' direction.. It carries out the reaction ATP + H2O = ADP + phosphate + H(+). Its function is as follows. The heterodimer acts as both an ATP-dependent DNA helicase and an ATP-dependent, dual-direction single-stranded exonuclease. Recognizes the chi site generating a DNA molecule suitable for the initiation of homologous recombination. The AddA nuclease domain is required for chi fragment generation; this subunit has the helicase and 3' -&gt; 5' nuclease activities. The sequence is that of ATP-dependent helicase/nuclease subunit A from Streptococcus pneumoniae serotype 2 (strain D39 / NCTC 7466).